The primary structure comprises 356 residues: cGAMP-activated phospholipase (356 aa).

One can recognise a PNPLA domain in the interval 15–206 (LSLNGGGARG…VANNPSYIGL (192 aa)). Residues 19–24 (GGGARG) carry the GXGXXG motif. The GXSXG signature appears at 58–62 (GTSIG). Ser-60 acts as the Nucleophile in catalysis. Catalysis depends on Asp-193, which acts as the Proton acceptor. A DGA/G motif is present at residues 193-195 (DGG).

It belongs to the patatin family.

The enzyme catalyses a 1,2-diacyl-sn-glycero-3-phosphocholine + H2O = a 2-acyl-sn-glycero-3-phosphocholine + a fatty acid + H(+). It carries out the reaction 1,2-di-(9Z-octadecenoyl)-sn-glycero-3-phosphoethanolamine + 2 H2O = sn-glycero-3-phosphoethanolamine + 2 (9Z)-octadecenoate + 2 H(+). With respect to regulation, phospholipase activity is specifically activated upon 3',3'-cGAMP binding, which is produced by the cognate cyclic nucleotide synthase encoded in the same operon. Effector phospholipase of a CBASS antiviral system. CBASS (cyclic oligonucleotide-based antiphage signaling system) provides immunity against bacteriophages. The CD-NTase protein (DncV) synthesizes cyclic nucleotides in response to infection; these serve as specific second messenger signals. The signals activate a diverse range of effectors, leading to bacterial cell death and thus abortive phage infection. A type II-A(GA) CBASS system. In terms of biological role, phospholipase that is activated upon binding to the cyclic dinucleotide (CDN) second messenger 3',3'-cyclic GMP-AMP (cGAMP). Degrades phospholipids in the cell membrane. Its function is as follows. Protects E.coli against phage infection. When capV and dncV are introduced in E.coli MG1655 there is 1000-fold protection against phage P1; protection against other phage (T2, T4, T5, T6 and lambda-vir) requires the 2 subsequent genes (cap2 and cap3). Upon P1 phage infection the activating molecule is produced between 30 and 40 minutes. Activation leads to bacterial cell lysis and death, which occurs before the phage has finished its replication cycle, thus protecting non-infected bacteria by aborting the phage infection and preventing its propagation. In another paper the capV-dncV-cap2-cap3 operon gives 10(4)-10(5)-fold protection against phages lambda, T2, T4 and T6, about 1000-fold protection against P1 and 10-fold protection against T5. In Escherichia coli (strain TW11681), this protein is cGAMP-activated phospholipase.